A 148-amino-acid chain; its full sequence is uncharacterized protein (148 aa).

A disordered region spans residues 1 to 108 (MGRAGPRSTA…PSRLRGKRSL (108 aa)). The span at 22-42 (RRPRPWQKPTSPRRLHRRRPR) shows a compositional bias: basic residues. Positions 88-97 (DTSASNPSQR) are enriched in polar residues.

This is an uncharacterized protein from Homo sapiens (Human).